The following is a 2248-amino-acid chain: Putative Polycomb group protein ASXL3 (2248 aa).

In terms of domain architecture, HTH HARE-type spans 10-84; it reads RTWAEAARLA…KSGLYALKKE (75 aa). Positions 156-232 are disordered; the sequence is ALKQALRQQQ…GKQTSQHLKR (77 aa). The span at 203–216 shows a compositional bias: basic and acidic residues; the sequence is KNGEADSSDKEMKH. Polar residues predominate over residues 219–228; it reads KSPTGKQTSQ. The region spanning 254-363 is the DEUBAD domain; the sequence is PGSILVNTNL…FERFYGEKLG (110 aa). Disordered regions lie at residues 368–414, 547–583, 607–643, 703–726, 762–853, 869–1052, 1123–1152, 1183–1203, 1431–1462, 1573–1596, and 1990–2068; these read ESVK…PASP, TSSM…EGQF, CISE…CTPA, EASP…PLTS, ERMA…ASIP, LQRT…TGAR, TSKE…ETKM, QQSL…VHSS, KLSA…GFAP, TAPS…ADTT, and LSPN…KRLS. Polar residues-rich tracts occupy residues 371–389, 395–407, 564–580, 607–617, and 624–643; these read KLTT…SCGT, SAQT…QPKS, AVET…SSLE, CISETSFSSES, and SLPS…CTPA. Residues 796–818 show a composition bias toward polar residues; the sequence is NLTSQQKNLSNTPEPIIMSSSSI. A compositionally biased stretch (low complexity) spans 937–949; sequence SHTSKSSEPSKSP. 3 stretches are compositionally biased toward basic and acidic residues: residues 950–968, 975–987, and 997–1008; these read DGIR…KTAE, CKEK…DDQS, and PEKEQPPREEPR. The span at 1036–1046 shows a compositional bias: polar residues; it reads RASTSTSVSGG. The segment covering 2016-2046 has biased composition (pro residues); sequence HPPPPPPPPPPPPLALPPPPPPPPPLPPPLP. A PHD-type; atypical zinc finger spans residues 2210–2247; that stretch reads ELKCSCRLKAMIVCKGCGAFCHDDCIGPSKLCVACLVV.

The protein belongs to the Asx family. As to quaternary structure, core component of the polycomb repressive deubiquitinase (PR-DUB) complex, at least composed of BAP1, one of ASXL1, ASXL2 or (probably) ASXL3, and one of MBD5 or MBD6. Distinct combinations of ASXL and MBD proteins may preferentially bind specific histone modification marks. The PR-DUB core associates with a number of accessory proteins, including FOXK1, FOXK2, KDM1B, HCFC1 and OGT; KDM1B specifically associates with ASXL2 PR-DUB complexes. Interacts (via PHD domain) with MBD5 and MBD6 (via MBD domain); the interaction is probably direct and mediates association of MBD proteins with the PR-DUB core. As to expression, expressed in pancreatic islets, testis, neuroblastoma, head and neck tumor.

The protein resides in the nucleus. In terms of biological role, putative Polycomb group (PcG) protein. PcG proteins act by forming multiprotein complexes, which are required to maintain the transcriptionally repressive state of homeotic genes throughout development. PcG proteins are not required to initiate repression, but to maintain it during later stages of development. They probably act via methylation of histones, rendering chromatin heritably changed in its expressibility. Non-catalytic component of the PR-DUB complex, a complex that specifically mediates deubiquitination of histone H2A monoubiquitinated at 'Lys-119' (H2AK119ub1). The PR-DUB complex is an epigenetic regulator of gene expression and acts as a transcriptional coactivator, affecting genes involved in development, cell communication, signaling, cell proliferation and cell viability. ASXL1, ASXL2 and ASXL3 function redundantly in the PR-DUB complex and are essential for chromatin recruitment and transcriptional activation of associated genes. The polypeptide is Putative Polycomb group protein ASXL3 (ASXL3) (Homo sapiens (Human)).